Reading from the N-terminus, the 382-residue chain is Anhydro-N-acetylmuramic acid kinase (382 aa).

22–29 provides a ligand contact to ATP; that stretch reads GTSMDGVD.

The protein belongs to the anhydro-N-acetylmuramic acid kinase family.

The catalysed reaction is 1,6-anhydro-N-acetyl-beta-muramate + ATP + H2O = N-acetyl-D-muramate 6-phosphate + ADP + H(+). It participates in amino-sugar metabolism; 1,6-anhydro-N-acetylmuramate degradation. Its pathway is cell wall biogenesis; peptidoglycan recycling. In terms of biological role, catalyzes the specific phosphorylation of 1,6-anhydro-N-acetylmuramic acid (anhMurNAc) with the simultaneous cleavage of the 1,6-anhydro ring, generating MurNAc-6-P. Is required for the utilization of anhMurNAc either imported from the medium or derived from its own cell wall murein, and thus plays a role in cell wall recycling. This is Anhydro-N-acetylmuramic acid kinase from Burkholderia cenocepacia (strain ATCC BAA-245 / DSM 16553 / LMG 16656 / NCTC 13227 / J2315 / CF5610) (Burkholderia cepacia (strain J2315)).